A 222-amino-acid chain; its full sequence is Probable transaldolase (222 aa).

The active-site Schiff-base intermediate with substrate is the K91.

The protein belongs to the transaldolase family. Type 3B subfamily.

The protein resides in the cytoplasm. It catalyses the reaction D-sedoheptulose 7-phosphate + D-glyceraldehyde 3-phosphate = D-erythrose 4-phosphate + beta-D-fructose 6-phosphate. It participates in carbohydrate degradation; pentose phosphate pathway; D-glyceraldehyde 3-phosphate and beta-D-fructose 6-phosphate from D-ribose 5-phosphate and D-xylulose 5-phosphate (non-oxidative stage): step 2/3. Its function is as follows. Transaldolase is important for the balance of metabolites in the pentose-phosphate pathway. The sequence is that of Probable transaldolase from Chlorobium limicola (strain DSM 245 / NBRC 103803 / 6330).